Consider the following 467-residue polypeptide: Serine/threonine-protein kinase SSN3 (467 aa).

2 stretches are compositionally biased toward polar residues: residues 1 to 12 and 29 to 39; these read MSFSNLPPSSGR and GSSSFTANNPS. The segment at 1–45 is disordered; sequence MSFSNLPPSSGRGSHADGASGRSMPPFPGSSSFTANNPSKGIHPN. Residues 79–408 enclose the Protein kinase domain; that stretch reads YLIVGFISSG…AKEALNHPYF (330 aa). ATP contacts are provided by residues 85 to 93 and K109; that span reads ISSGTYGRV. The Proton acceptor role is filled by D211. The disordered stretch occupies residues 426–467; the sequence is YPNRRVSQDDNDIRSGSLPGTKRSGLPDDTLTSRAAKRAREM.

Belongs to the protein kinase superfamily. CMGC Ser/Thr protein kinase family. CDC2/CDKX subfamily. As to quaternary structure, component of the SRB8-11 complex, a regulatory module of the Mediator complex. The cofactor is Mg(2+).

It is found in the nucleus. It carries out the reaction L-seryl-[protein] + ATP = O-phospho-L-seryl-[protein] + ADP + H(+). The catalysed reaction is L-threonyl-[protein] + ATP = O-phospho-L-threonyl-[protein] + ADP + H(+). It catalyses the reaction [DNA-directed RNA polymerase] + ATP = phospho-[DNA-directed RNA polymerase] + ADP + H(+). Its function is as follows. Component of the SRB8-11 complex. The SRB8-11 complex is a regulatory module of the Mediator complex which is itself involved in regulation of basal and activated RNA polymerase II-dependent transcription. The SRB8-11 complex may be involved in the transcriptional repression of a subset of genes regulated by Mediator. It may inhibit the association of the Mediator complex with RNA polymerase II to form the holoenzyme complex. The SRB8-11 complex phosphorylates the C-terminal domain (CTD) of the largest subunit of RNA polymerase II. This Coccidioides immitis (strain RS) (Valley fever fungus) protein is Serine/threonine-protein kinase SSN3 (SSN3).